We begin with the raw amino-acid sequence, 273 residues long: Large ribosomal subunit protein uL2cz/uL2cy (273 aa).

The tract at residues 224-273 is disordered; that stretch reads NPVDHPHGGGEGRAPIGRKKPATPWGYPALGRRSRKRNKYSDRFILRRRK. Over residues 262-273 the composition is skewed to basic and acidic residues; sequence KYSDRFILRRRK.

This sequence belongs to the universal ribosomal protein uL2 family. Part of the 50S ribosomal subunit.

The protein resides in the plastid. Its subcellular location is the chloroplast. The polypeptide is Large ribosomal subunit protein uL2cz/uL2cy (rpl2-A) (Piper cenocladum (Ant piper)).